A 966-amino-acid polypeptide reads, in one-letter code: Glycine dehydrogenase (decarboxylating) (966 aa).

K713 carries the N6-(pyridoxal phosphate)lysine modification.

The protein belongs to the GcvP family. The glycine cleavage system is composed of four proteins: P, T, L and H. It depends on pyridoxal 5'-phosphate as a cofactor.

It carries out the reaction N(6)-[(R)-lipoyl]-L-lysyl-[glycine-cleavage complex H protein] + glycine + H(+) = N(6)-[(R)-S(8)-aminomethyldihydrolipoyl]-L-lysyl-[glycine-cleavage complex H protein] + CO2. Functionally, the glycine cleavage system catalyzes the degradation of glycine. The P protein binds the alpha-amino group of glycine through its pyridoxal phosphate cofactor; CO(2) is released and the remaining methylamine moiety is then transferred to the lipoamide cofactor of the H protein. This is Glycine dehydrogenase (decarboxylating) from Shewanella halifaxensis (strain HAW-EB4).